The primary structure comprises 641 residues: Probable ATP-dependent helicase YpvA (641 aa).

The Helicase ATP-binding domain occupies Tyr29 to Leu303. Ala64 to Thr71 provides a ligand contact to ATP. Cys133, Cys197, Cys200, and Cys206 together coordinate [4Fe-4S] cluster. A DEGH box motif is present at residues Asp257–His260.

Belongs to the helicase family. DinG subfamily. The cofactor is [4Fe-4S] cluster.

The enzyme catalyses Couples ATP hydrolysis with the unwinding of duplex DNA at the replication fork by translocating in the 5'-3' direction. This creates two antiparallel DNA single strands (ssDNA). The leading ssDNA polymer is the template for DNA polymerase III holoenzyme which synthesizes a continuous strand.. It carries out the reaction ATP + H2O = ADP + phosphate + H(+). Its function is as follows. Might be a 5'-3' DNA helicase. This chain is Probable ATP-dependent helicase YpvA (ypvA), found in Bacillus subtilis (strain 168).